The following is a 489-amino-acid chain: Rhamnulokinase (489 aa).

Ala-13 to Arg-17 is an ATP binding site. Cys-68 and Cys-222 form a disulfide bridge. Residues Gly-83 and His-236–Thr-238 contribute to the substrate site. Asp-237 serves as the catalytic Proton acceptor. ATP is bound at residue Thr-259. Asn-296 lines the substrate pocket. Residue Gln-304 coordinates ATP. Cys-353 and Cys-370 are disulfide-bonded. Gly-402 provides a ligand contact to ATP. A disulfide bridge connects residues Cys-413 and Cys-417.

It belongs to the rhamnulokinase family. It depends on Mg(2+) as a cofactor.

It catalyses the reaction L-rhamnulose + ATP = L-rhamnulose 1-phosphate + ADP + H(+). It functions in the pathway carbohydrate degradation; L-rhamnose degradation; glycerone phosphate from L-rhamnose: step 2/3. Its function is as follows. Involved in the catabolism of L-rhamnose (6-deoxy-L-mannose). Catalyzes the transfer of the gamma-phosphate group from ATP to the 1-hydroxyl group of L-rhamnulose to yield L-rhamnulose 1-phosphate. This Salmonella enteritidis PT4 (strain P125109) protein is Rhamnulokinase.